We begin with the raw amino-acid sequence, 628 residues long: Neutral/alkaline invertase 1, mitochondrial (628 aa).

The N-terminal 35 residues, 1-35 (MAAAAISHLRRGAPRHARALLYLSTRRFSSSSAAG), are a transit peptide targeting the mitochondrion. A compositionally biased stretch (low complexity) spans 79–90 (ASSAPPLESPPI). Positions 79–113 (ASSAPPLESPPIEELPDDATPPPEEEPGLPAPEKD) are disordered.

It belongs to the glycosyl hydrolase 100 family. In terms of tissue distribution, expressed in roots, leaf and stems.

Its subcellular location is the mitochondrion. The enzyme catalyses Hydrolysis of terminal non-reducing beta-D-fructofuranoside residues in beta-D-fructofuranosides.. In terms of biological role, mitochondrial invertase that cleaves sucrose into glucose and fructose. The sequence is that of Neutral/alkaline invertase 1, mitochondrial from Oryza sativa subsp. japonica (Rice).